The chain runs to 172 residues: Type VI secretion system sheath protein TssB1 (172 aa).

Forms a heterodimer with TssC1. Heterodimers assemble to form the sheath of the T6SS machinery. Interacts with TagJ. Interacts with TssA1.

Core component of the H1 type VI (H1-T6SS) secretion system that plays a role in the release of toxins targeting both eukaryotic and prokaryotic species. Forms the sheath of the structure by assembling into tubules together with TssC1 resulting in the stacking of cogwheel-like structures showing predominantly a 12-fold symmetry. The sheath contracts to provide the energy needed for effector delivery. In Pseudomonas aeruginosa (strain ATCC 15692 / DSM 22644 / CIP 104116 / JCM 14847 / LMG 12228 / 1C / PRS 101 / PAO1), this protein is Type VI secretion system sheath protein TssB1.